Here is a 662-residue protein sequence, read N- to C-terminus: Polyunsaturated fatty acid lipoxygenase ALOX15 (662 aa).

The region spanning 2 to 114 (GLYRIRVSTG…VLSLPEGTGR (113 aa)) is the PLAT domain. One can recognise a Lipoxygenase domain in the interval 115–662 (TVGDDPQGLF…PSIVENSVAI (548 aa)). H360, H365, H540, H544, and I662 together coordinate Fe cation.

This sequence belongs to the lipoxygenase family. Interacts with PEBP1; in response to IL13/interleukin-13, prevents the interaction of PEBP1 with RAF1 to activate the ERK signaling cascade. Fe cation is required as a cofactor.

The protein localises to the cytoplasm. The protein resides in the cytosol. Its subcellular location is the cell membrane. It is found in the lipid droplet. The enzyme catalyses (5Z,8Z,11Z,14Z)-eicosatetraenoate + O2 = (12S)-hydroperoxy-(5Z,8Z,10E,14Z)-eicosatetraenoate. The catalysed reaction is (9Z,12Z)-octadecadienoate + O2 = (13S)-hydroperoxy-(9Z,11E)-octadecadienoate. It carries out the reaction (5Z,8Z,11Z,14Z)-eicosatetraenoate + O2 = (15S)-hydroperoxy-(5Z,8Z,11Z,13E)-eicosatetraenoate. It catalyses the reaction (5Z,8Z,11Z,14Z)-eicosatetraenoate + 2 O2 = (14R,15S)-dihydroperoxy-(5Z,8Z,10E,12E)-eicosatetraenoate. The enzyme catalyses (5Z,8Z,11Z,14Z)-eicosatetraenoate + 2 O2 = (8S,15S)-dihydroperoxy-(5Z,9E,11Z,13E)-eicosatetraenoate. The catalysed reaction is (14S,15R)-epoxy-(5Z,8Z,11Z)-eicosatrienoate + O2 = (8S)-hydroperoxy-(14S,15R)-epoxy-(5Z,9E,11Z)-eicosatrienoate. It carries out the reaction (14S,15R)-epoxy-(5Z,8Z,11Z)-eicosatrienoate + O2 = (12S)-hydroperoxy-(14S,15R)-epoxy-(5Z,8Z,10E)-eicosatrienoate. It catalyses the reaction (14R,15S)-epoxy-(5Z,8Z,11Z)-eicosatrienoate + O2 = (5S)-hydroperoxy-(14R,15S)-epoxy-(6E,8Z,11Z)-eicosatrienoate. The enzyme catalyses (14R,15S)-epoxy-(5Z,8Z,11Z)-eicosatrienoate + O2 = (12S)-hydroperoxy-(14R,15S)-epoxy-(5Z,8Z,10E)-eicosatrienoate. The catalysed reaction is (15R)-hydroperoxy-(5Z,8Z,11Z,13E)-eicosatetraenoate = 15-oxo-(5Z,8Z,11Z,13E)-eicosatetraenoate + H2O. It carries out the reaction (15S)-hydroperoxy-(5Z,8Z,11Z,13E)-eicosatetraenoate = (14S,15S)-epoxy-(5Z,8Z,10E,12E)-eicosatetraenoate + H2O. It catalyses the reaction (12S)-hydroperoxy-(5Z,8Z,10E,14Z)-eicosatetraenoate = (8S)-hydroxy-(11S,12S)-epoxy-(5Z,9E,14Z)-eicosatrienoate. The enzyme catalyses (4Z,7Z,10Z,13Z,16Z)-docosapentaenoate + O2 = 14-hydroperoxy-(4Z,7Z,10Z,12E,16Z)-docosapentaenoate. The catalysed reaction is (7Z,10Z,13Z,16Z,19Z)-docosapentaenoate + O2 = 14-hydroperoxy-(7Z,10Z,12E,16Z,19Z)-docosapentaenoate. It carries out the reaction (4Z,7Z,10Z,13Z,16Z,19Z)-docosahexaenoate + O2 = (14S)-hydroperoxy-(4Z,7Z,10Z,12E,16Z,19Z)-docosahexaenoate. It catalyses the reaction (4Z,7Z,10Z,13Z,16Z,19Z)-docosahexaenoate + O2 = (17S)-hydroperoxy-(4Z,7Z,10Z,13Z,15E,19Z)-docosahexaenoate. The enzyme catalyses (7S)-hydroperoxy-(4Z,8E,10Z,13Z,16Z,19Z)-docosahexaenoate + O2 = (7S,14S)-dihydroperoxy-(4Z,8E,10Z,12E,16Z,19Z)-docosahexaenoate. The catalysed reaction is (7S)-hydroperoxy-(4Z,8E,10Z,13Z,16Z,19Z)-docosahexaenoate + O2 = (7S,17S)-dihydroperoxy-(4Z,8E,10Z,13Z,15E,19Z)-docosahexaenoate. It carries out the reaction (4Z,7Z,10Z,13Z,16Z,19Z)-docosahexaenoate + O2 = (11S)-hydroperoxy-(4Z,7Z,9E,13Z,16Z,19Z)-docosahexaenoate. It catalyses the reaction N-(5Z,8Z,11Z,14Z)-eicosatetraenoyl-taurine + O2 = N-(12S)-hydroperoxy-(5Z,8Z,10E,14Z)-eicosatetraenoyl-taurine. The enzyme catalyses N-(5Z,8Z,11Z,14Z)-eicosatetraenoyl-gamma-aminobutanoate + O2 = N-(12S)-hydroperoxy-(5Z,8Z,10E,14Z)-eicosatetraenoyl-gamma-aminobutanoate. The catalysed reaction is N-(5Z,8Z,11Z,14Z)-eicosatetraenoyl-glycine + O2 = N-(12S)-hydroperoxy-(5Z,8Z,10E,14Z)-eicosatetraenoyl-glycine. It carries out the reaction N-(5Z,8Z,11Z,14Z)-eicosatetraenoyl-L-alanine + O2 = N-(12S)-hydroperoxy-(5Z,8Z,10E,14Z)-eicosatetraenoyl-alanine. It catalyses the reaction N-(5Z,8Z,11Z,14Z)-eicosatetraenoyl-taurine + O2 = N-(15S)-hydroperoxy-(5Z,8Z,11Z,13E)-eicosatetraenoyl-taurine. The enzyme catalyses N-(5Z,8Z,11Z,14Z)-eicosatetraenoyl-gamma-aminobutanoate + O2 = N-(15S)-hydroperoxy-(5Z,8Z,11Z,13E)-eicosatetraenoyl-gamma-aminobutanoate. The catalysed reaction is N-(5Z,8Z,11Z,14Z)-eicosatetraenoyl-glycine + O2 = N-(15S)-hydroperoxy-(5Z,8Z,11Z,13E)-eicosatetraenoyl-glycine. It carries out the reaction N-(5Z,8Z,11Z,14Z)-eicosatetraenoyl-L-alanine + O2 = N-(15S)-hydroperoxy-(5Z,8Z,11Z,13E)-eicosatetraenoyl-alanine. The protein operates within lipid metabolism; hydroperoxy eicosatetraenoic acid biosynthesis. Its function is as follows. Non-heme iron-containing dioxygenase that catalyzes the stereo-specific peroxidation of free and esterified polyunsaturated fatty acids generating a spectrum of bioactive lipid mediators. It inserts peroxyl groups at C12 or C15 of arachidonate ((5Z,8Z,11Z,14Z)-eicosatetraenoate) producing both 12-hydroperoxyeicosatetraenoate/12-HPETE and 15-hydroperoxyeicosatetraenoate/15-HPETE. It may then act on 12-HPETE to produce hepoxilins, which may show pro-inflammatory properties. Can also peroxidize linoleate ((9Z,12Z)-octadecadienoate) to 13-hydroperoxyoctadecadienoate. May participate in the sequential oxidations of DHA ((4Z,7Z,10Z,13Z,16Z,19Z)-docosahexaenoate) to generate specialized pro-resolving mediators (SPMs)like resolvin D5 ((7S,17S)-diHPDHA) and (7S,14S)-diHPDHA, that actively down-regulate the immune response and have anti-aggregation properties with platelets. Can convert epoxy fatty acids to hydroperoxy-epoxides derivatives followed by an intramolecular nucleophilic substitution leading to the formation of monocyclic endoperoxides. Plays an important role during the maintenance of self-tolerance by peroxidizing membrane-bound phosphatidylethanolamine which can then signal the sorting process for clearance of apoptotic cells during inflammation and prevent an autoimmune response. In addition to its role in the immune and inflammatory responses, this enzyme may play a role in epithelial wound healing in the cornea through production of lipoxin A4 (LXA(4)) and docosahexaenoic acid-derived neuroprotectin D1 (NPD1; 10R,17S-HDHA), both lipid autacoids exhibit anti-inflammatory and neuroprotective properties. Furthermore, it may regulate actin polymerization which is crucial for several biological processes such as the phagocytosis of apoptotic cells. It is also implicated in the generation of endogenous ligands for peroxisome proliferator activated receptor (PPAR-gamma), hence modulating macrophage development and function. It may also exert a negative effect on skeletal development by regulating bone mass through this pathway. As well as participates in ER stress and downstream inflammation in adipocytes, pancreatic islets, and liver. Finally, it is also involved in the cellular response to IL13/interleukin-13. In Pongo abelii (Sumatran orangutan), this protein is Polyunsaturated fatty acid lipoxygenase ALOX15.